The primary structure comprises 103 residues: Small ribosomal subunit protein uS10 (103 aa).

Belongs to the universal ribosomal protein uS10 family. In terms of assembly, part of the 30S ribosomal subunit.

In terms of biological role, involved in the binding of tRNA to the ribosomes. In Hydrogenovibrio crunogenus (strain DSM 25203 / XCL-2) (Thiomicrospira crunogena), this protein is Small ribosomal subunit protein uS10.